The sequence spans 295 residues: UDP-N-acetylenolpyruvoylglucosamine reductase (295 aa).

Residues 23–188 enclose the FAD-binding PCMH-type domain; that stretch reads QVGGPADFLA…ISAKFALKPG (166 aa). Arg-167 is a catalytic residue. Ser-217 functions as the Proton donor in the catalytic mechanism. Residue Glu-287 is part of the active site.

This sequence belongs to the MurB family. FAD serves as cofactor.

Its subcellular location is the cytoplasm. It catalyses the reaction UDP-N-acetyl-alpha-D-muramate + NADP(+) = UDP-N-acetyl-3-O-(1-carboxyvinyl)-alpha-D-glucosamine + NADPH + H(+). It participates in cell wall biogenesis; peptidoglycan biosynthesis. In terms of biological role, cell wall formation. This Streptococcus equi subsp. equi (strain 4047) protein is UDP-N-acetylenolpyruvoylglucosamine reductase.